The primary structure comprises 154 residues: MLKRTSFVSSLFISSAVLLSILLPSGQAHAQSASIEAKTVNSTKEWTISDIEVTYKPNAVLSLGAVEFQFPDGFHATTRDSVNGRTLKETQILNDGKTVRLPLTLDLLGASEFDLVMVRKTLPRAGTYTIKGDVVNGLGIGSFYAETQLVIDPR.

The N-terminal stretch at Met1–Ala30 is a signal peptide.

Belongs to the BslA/BslB family. As to quaternary structure, monomer in vitro.

It localises to the secreted. Has a minor role in biofilm architecture. May contribute to the surface hydrophobicity. In Bacillus subtilis (strain 168), this protein is Probable biofilm-surface layer protein B.